The following is a 373-amino-acid chain: Plasmepsin VIII (373 aa).

The signal sequence occupies residues 1-21 (MNKFFVFPLLLILNSIVLVKS). The 321-residue stretch at 50 to 370 (FIGEISIGNP…EKDNMRIGLA (321 aa)) folds into the Peptidase A1 domain. Residues Asp-68 and Asp-258 contribute to the active site.

Belongs to the peptidase A1 family.

In terms of biological role, during the development in the mosquito vector, plays an essential role in sporozoite egress from the oocyst and sporozoite gliding motility, which is required for the invasion of salivary glands and subsequent transmission to the host. The protein is Plasmepsin VIII of Plasmodium berghei (strain Anka).